Reading from the N-terminus, the 71-residue chain is Lantibiotic Flvbeta.c (71 aa).

Positions 1 to 33 (MENKFDMEKFKKLAAVVSEDELDTLLDETTVGA) are cleaved as a propeptide — cleaved by FlvT. A cross-link (lanthionine (Ser-Cys); by FlvM2) is located at residues 35-39 (SSNDC). S36 carries the post-translational modification 2,3-didehydroalanine (Ser); by FlvM2. Cross-links (beta-methyllanthionine (Thr-Cys); by FlvM2) lie at residues 54–60 (TSKFDWC), 62–65 (TGAC), and 66–69 (TTSC).

In terms of processing, contains LL-lanthionine and DL-beta-methyllanthionine, when coepressed in E.coli with the flavecin synthetase FlvM2.

It is found in the secreted. In terms of biological role, lanthionine-containing peptide antibiotic (lantibiotic) that is probably active on Gram-positive bacteria, since its analog [Del1]Flvbeta.c shows antibacterial activity against M.luteus. This activity is not synergistically enhanced by [Del2]Flvalpha.a, an analog of Flvalpha.a, which is encoded by the same operon than Flvbeta.c. The bactericidal activity of lantibiotics is based on depolarization of energized bacterial cytoplasmic membranes, initiated by the formation of aqueous transmembrane pores. This is Lantibiotic Flvbeta.c from Ruminococcus flavefaciens.